Here is a 159-residue protein sequence, read N- to C-terminus: Immunoglobulin J chain (159 aa).

The signal sequence occupies residues 1 to 22 (MKNHLLFWGVLAVFIKAVHVKA). Gln-23 carries the pyrrolidone carboxylic acid modification. Intrachain disulfides connect Cys-35/Cys-123, Cys-94/Cys-114, and Cys-131/Cys-156. Asn-71 carries N-linked (GlcNAc...) (complex) asparagine glycosylation.

In terms of assembly, part of the secretory IgA (sIgA) complex that consists of two, four or five IgA monomers, and two additional non-Ig polypeptides, namely the JCHAIN and the secretory component (the proteolytic product of PIGR). Part of the secretory IgM (sIgM) complex that consists of five IgM monomers, and two additional non-Ig polypeptides, namely the JCHAIN and the secretory component (the proteolytic product of PIGR). JCHAIN-containing IgM interacts (via CH4 domain) with FCRM (via Ig-like domain).

It is found in the secreted. Functionally, serves to link two monomer units of either IgM or IgA. In the case of IgM, the J chain-joined dimer is a nucleating unit for the IgM pentamer, and in the case of IgA it induces dimers and/or larger polymers. It also helps to bind these immunoglobulins to secretory component. The polypeptide is Immunoglobulin J chain (Homo sapiens (Human)).